Consider the following 935-residue polypeptide: Myocardin (935 aa).

The short motif at 12–27 (IRRKFRSVLQLRLQQR) is the MEF2C-binding element. RPEL repeat units lie at residues 18–43 (SVLQ…PPLK), 62–87 (DSLR…QAST), and 106–131 (DDLN…PMDS). The disordered stretch occupies residues 37 to 73 (GLIPPLKGPTEFHDPRKQLDSAKTEDSLRRKGRNRSD). A compositionally biased stretch (basic and acidic residues) spans 46–73 (TEFHDPRKQLDSAKTEDSLRRKGRNRSD). The interval 153–201 (FEDDSSRDGLSPDQARSEDPQGSTGSTPDIKSTEAPLDTIQDLTPGSES) is HDAC5-binding. A disordered region spans residues 155–283 (DDSSRDGLSP…SPPPMDSAYA (129 aa)). Polar residues-rich tracts occupy residues 172 to 182 (PQGSTGSTPDI) and 206 to 216 (AASQPGNQSDP). The span at 244–261 (NRHKKPKDPKPKVKKLKY) shows a compositional bias: basic residues. Residues 287 to 322 (QQQQLFLQLQILSQQQQQQQQQQQQQQQQQQQQQRF) adopt a coiled-coil conformation. Residues 337-378 (EQMARNPNPSSTPLSNTPLSPVKNSISGQTGVSSLKPGPLPP) form a disordered region. Low complexity predominate over residues 342 to 357 (NPNPSSTPLSNTPLSP). A compositionally biased stretch (polar residues) spans 358 to 369 (VKNSISGQTGVS). In terms of domain architecture, SAP spans 380-414 (LDDLKVSELRQQLRIRGLPVSGTKTALVDRLRPFQ). 4 positions are modified to phosphoserine; by GSK3-beta: Ser454, Ser458, Ser462, and Ser466. The disordered stretch occupies residues 498 to 518 (ESLLSSLNGGSGPSEPDGLDS). A coiled-coil region spans residues 519-563 (EKDKMLVEKQKVINQLTWKLRQEQRQVEELRMQLQKQKSSCSDQK). The disordered stretch occupies residues 579–605 (SCPFAPQQASGKGQGHSSDSPPPACET). Positions 585 to 597 (QQASGKGQGHSSD) are enriched in polar residues. Phosphoserine; by GSK3-beta occurs at positions 624, 628, 632, and 636. Positions 654 to 731 (NNHYFLASSS…DAVKQQMTRS (78 aa)) are disordered. A compositionally biased stretch (polar residues) spans 660–691 (ASSSGAQRENHGVSSPSSSQGCAQMTGLQSSD). A compositionally biased stretch (low complexity) spans 695–709 (PTFSIPSPTFSKSSS). A required for interaction with and ubiquitination by STUB1 region spans residues 714–935 (ITQPPSYEDA…SPMDLHLQQW (222 aa)). 3 positions are modified to phosphoserine; by MAPK1 and MAPK3: Ser812, Ser859, and Ser866. Thr893 bears the Phosphothreonine; by MAPK1 and MAPK3 mark.

Homodimer. Interacts with MLLT7/FOXO4. Interacts with SRF, its association does not depend on specific DNA sequences for ternary complex formation. Interacts (via C-terminal) with EP300 (via CREB-binding domain). Interacts with HDAC4 and HDAC5. Interacts with MEF2C. Interacts (via C-terminus) with STUB1/CHIP. Interacts with PURB. In terms of processing, ubiquitinated; by STUB1/CHIP at the C-terminus, leading to its degradation by the proteasome. Phosphorylation by GSK3B is required for STUB1/CHIP-mediated ubiquitination. Post-translationally, phosphorylation negatively regulates transcriptional activity. Phosphorylated; by GSK3B. Expressed in smooth muscle cell-containing tissues. Expressed in the heart. Expressed in the aorta and bladder. Weakly expression in the lung, testis and kidney. Weakly expressed in the stomach. Weakly expressed in the intestine and colon. In terms of tissue distribution, expressed in the heart. As to expression, predominantly expressed in cardiac muscle. Predominantly expressed in smooth muscle cell-rich tissues.

It localises to the nucleus speckle. Functionally, smooth muscle cells (SM) and cardiac muscle cells-specific transcriptional factor which uses the canonical single or multiple CArG boxes DNA sequence. Acts as a cofactor of serum response factor (SRF) with the potential to modulate SRF-target genes. Plays a crucial role in cardiogenesis, urinary bladder development, and differentiation of the smooth muscle cell lineage (myogenesis). Positively regulates the transcription of genes involved in vascular smooth muscle contraction. Its function is as follows. Positively regulates the activation of smooth muscle cell gene promoter regions. Positively regulates the activation of smooth muscle cell gene promoter regions. Activation of the MYH6 promoter is enhanced in the presence of MEF2C. This chain is Myocardin (Myocd), found in Mus musculus (Mouse).